The sequence spans 493 residues: MTCGFNSIGCGFRPGNFSCVSACGPRPSRCCITAAPYRGISCYRGLTGGFGSHSVCGGFRAGSCGRSFGYRSGGVCGPSPPCITTVSVNESLLTPLNLEIDPNAQCVKQEEKEQIKSLNSRFAAFIDKVRFLEQQNKLLETKLQFYQNRECCQSNLEPLFAGYIETLRREAECVEADSGRLASELNHVQEVLEGYKKKYEEEVALRATAENEFVALKKDVDCAYLRKSDLEANVEALIQEIDFLRRLYEEEIRILQSHISDTSVVVKLDNSRDLNMDCIVAEIKAQYDDIATRSRAEAESWYRSKCEEMKATVIRHGETLRRTKEEINELNRMIQRLTAEVENAKCQNSKLEAAVAQSEQQGEAALSDARCKLAELEGALQKAKQDMACLIREYQEVMNSKLGLDIEIATYRRLLEGEEQRLCEGVEAVNVCVSSSRGGVVCGDLCVSGSRPVTGSVCSAPCNGNLVVSTGLCKPCGQLNTTCGGGSCGQGRH.

The interval 1–111 (MTCGFNSIGC…PNAQCVKQEE (111 aa)) is head. One can recognise an IF rod domain in the interval 111–422 (EKEQIKSLNS…RLLEGEEQRL (312 aa)). Positions 112 to 146 (KEQIKSLNSRFAAFIDKVRFLEQQNKLLETKLQFY) are coil 1A. Residues 147–156 (QNRECCQSNL) form a linker 1 region. The coil 1B stretch occupies residues 157–257 (EPLFAGYIET…YEEEIRILQS (101 aa)). Residue Lys217 forms a Glycyl lysine isopeptide (Lys-Gly) (interchain with G-Cter in SUMO1) linkage. Residues 258–274 (HISDTSVVVKLDNSRDL) are linker 12. Residues 275 to 418 (NMDCIVAEIK…ATYRRLLEGE (144 aa)) form a coil 2 region. A tail region spans residues 419-493 (EQRLCEGVEA…GGGSCGQGRH (75 aa)).

This sequence belongs to the intermediate filament family. As to quaternary structure, heterotetramer of two type I and two type II keratins. Synthesis begins in the cortex 10-15 cell layers above the apex of the dermal papilla and ends abruptly in the middle of the cortex.

This chain is Keratin, type II cuticular Hb3 (KRT83), found in Homo sapiens (Human).